A 167-amino-acid polypeptide reads, in one-letter code: CS6 fimbrial subunit B (167 aa).

The signal sequence occupies residues 1-21 (MLKKIISAIALIAGTSGVVNA).

The protein localises to the fimbrium. The sequence is that of CS6 fimbrial subunit B (cssB) from Escherichia coli.